We begin with the raw amino-acid sequence, 315 residues long: Trimethylguanosine synthase (315 aa).

The segment at 1–58 is required for correct nucleolar localization; it reads MGRTFIHASKIKHAARKRKHHSNFRTLIKLLNNDAYKIESSKPLKNGKLFKYWKNRRR. Aspartate 126 is an S-adenosyl-L-methionine binding site. The segment at 271–315 is disordered; sequence TENSRRESSEKEELSSENEELSKRKKHESTTTTKDNTVDIYDVNG. Residues 273-284 show a composition bias toward basic and acidic residues; sequence NSRRESSEKEEL.

Belongs to the methyltransferase superfamily. Trimethylguanosine synthase family. In terms of assembly, monomer. Interacts with the spliceosomal snRNP core component SMB1 and the snoRNP components CBF5 and NOP58.

It is found in the nucleus. Its subcellular location is the nucleolus. It catalyses the reaction a 5'-end (N(7)-methyl 5'-triphosphoguanosine)-ribonucleoside in snRNA + S-adenosyl-L-methionine = a 5'-end (N(2),N(7)-dimethyl 5'-triphosphoguanosine)-ribonucleoside in snRNA + S-adenosyl-L-homocysteine + H(+). The enzyme catalyses a 5'-end (N(7)-methyl 5'-triphosphoguanosine)-ribonucleoside in snoRNA + S-adenosyl-L-methionine = a 5'-end (N(2),N(7)-dimethyl 5'-triphosphoguanosine)-ribonucleoside in snoRNA + S-adenosyl-L-homocysteine + H(+). It carries out the reaction a 5'-end (N(2),N(7)-dimethyl 5'-triphosphoguanosine)-ribonucleoside in snRNA + S-adenosyl-L-methionine = a 5'-end (N(2),N(2),N(7)-trimethyl 5'-triphosphoguanosine)-ribonucleoside in snRNA + S-adenosyl-L-homocysteine + H(+). The catalysed reaction is a 5'-end (N(2),N(7)-dimethyl 5'-triphosphoguanosine)-ribonucleoside in snoRNA + S-adenosyl-L-methionine = a 5'-end (N(2),N(2),N(7)-trimethyl 5'-triphosphoguanosine)-ribonucleoside in snoRNA + S-adenosyl-L-homocysteine + H(+). With respect to regulation, substrate inhibited by S-adenosyl-L-homocysteine. Functionally, catalyzes the two serial methylation steps for the conversion of the 7-monomethylguanosine (m(7)G) caps of snRNAs and snoRNAs to a 2,2,7-trimethylguanosine (m(2,2,7)G) cap structure. The enzyme is specific for guanine, and N7 methylation must precede N2 methylation. Hypermethylates the m3G cap on TLC1 telomerase which affects telomere silencing and telomere length regulation. Required for pre-mRNA splicing, pre-rRNA processing and small ribosomal subunit synthesis. Involved in nucleolar structural organization. The chain is Trimethylguanosine synthase (TGS1) from Saccharomyces cerevisiae (strain ATCC 204508 / S288c) (Baker's yeast).